The chain runs to 619 residues: MFPRVSMRRRSAEVSPTEPMEKGNGKNQTNRICLLVALSLFFWALLLYFHFVVLGTSNIDKQLQLQPSYAQSQPSSVSLRVDKFPIEPHAAPSKPPPKEPLVTIDKPILPPAPVANSSSTFKPPRIVESGKKQEFSFIRALKTVDNKSDPCGGKYIYVHNLPSKFNEDMLRDCKKLSLWTNMCKFTTNAGLGPPLENVEGVFSDEGWYATNQFAVDVIFSNRMKQYKCLTNDSSLAAAIFVPFYAGFDIARYLWGYNISRRDAASLELVDWLMKRPEWDIMRGKDHFLVAGRITWDFRRLSEEETDWGNKLLFLPAAKNMSMLVVESSPWNANDFGIPYPTYFHPAKDSEVFEWQDRMRNLERKWLFSFAGAPRPDNPKSIRGQIIDQCRNSNVGKLLECDFGESKCHAPSSIMQMFQSSLFCLQPQGDSYTRRSAFDSMLAGCIPVFFHPGSAYTQYTWHLPKNYTTYSVFIPEDDVRKRNISIEERLLQIPAKQVKIMRENVINLIPRLIYADPRSELETQKDAFDVSVQAVIDKVTRLRKNMIEGRTEYDYFVEENSWKYALLEEGQREAGGHVWDPFFSKPKPGEDGSSDGNGGTTISADAAKNSWKSEQRDKTQ.

The segment at Met-1 to Lys-26 is disordered. Over Met-1–Cys-33 the chain is Cytoplasmic. A helical; Signal-anchor for type II membrane protein transmembrane segment spans residues Leu-34–Leu-54. At Gly-55 to Gln-619 the chain is on the lumenal side. N-linked (GlcNAc...) asparagine glycosylation is found at Asn-116, Asn-146, Asn-231, Asn-257, Asn-319, Asn-465, and Asn-482. The tract at residues His-576 to Gln-619 is disordered. Residues Trp-610–Gln-619 are compositionally biased toward basic and acidic residues.

Belongs to the glycosyltransferase 47 family. Interacts with CSLC4 and FUT1. Ubiquitous.

Its subcellular location is the golgi apparatus. It localises to the golgi stack membrane. The protein resides in the golgi apparatus membrane. In terms of biological role, involved in the attachment of the Gal residue on the third xylosyl unit within the XXXG core structure of xyloglucan, the principal glycan that interlaces the cellulose microfibrils in plant cell wall. Associates with other xyloglucan-synthesizing enzymes to form multiprotein complexes for xyloglucan synthesis in the Golgi. Interacts with actin and is required for the proper endomembrane organization and for the cell elongation. Not involved in the trafficking from the endoplasmic reticulum to the vacuoles. Involved in salt stress tolerance. Participates in the control of the expression of genes encoding for proteins involved in reactive oxygen species (ROS) detoxification under salt stress. May contribute to the maintenance of the proper organization of actin microfilaments during salt stress-induced ROS production. This is Xyloglucan galactosyltransferase MUR3 from Arabidopsis thaliana (Mouse-ear cress).